The sequence spans 333 residues: Autoinducer 2 import system permease protein LsrD (333 aa).

Helical transmembrane passes span 7-27 (YGWE…FGLS), 45-65 (ICIG…GIDI), 67-87 (FGST…AGVP), 90-110 (VAIP…AGLI), 118-138 (LVIT…LSGL), 162-182 (LFGL…FWLL), 212-232 (TLCM…ILLV), 240-260 (SDLG…GGAN), 261-281 (IYGG…VGYL), and 288-308 (IGTP…LVVV).

Belongs to the binding-protein-dependent transport system permease family. AraH/RbsC subfamily. As to quaternary structure, the complex is composed of two ATP-binding proteins (LsrA), two transmembrane proteins (LsrC and LsrD) and a solute-binding protein (LsrB).

The protein localises to the cell inner membrane. Its function is as follows. Part of the ABC transporter complex LsrABCD involved in autoinducer 2 (AI-2) import. Probably responsible for the translocation of the substrate across the membrane. In Yersinia pseudotuberculosis serotype IB (strain PB1/+), this protein is Autoinducer 2 import system permease protein LsrD (lsrD).